A 743-amino-acid polypeptide reads, in one-letter code: Putative pre-mRNA-splicing factor ATP-dependent RNA helicase DHX32 (743 aa).

M1 bears the N-acetylmethionine mark. A disordered region spans residues 1-28 (MEEEGLECPNSSSEKRYFPESLDSSDGD). Residues 72-238 (MENLLQNQIV…YGNVPVIEVK (167 aa)) enclose the Helicase ATP-binding domain. 85 to 92 (GDAKCGKS) provides a ligand contact to ATP. Positions 185 to 188 (DDIH) match the DEAH box motif.

It belongs to the DEAD box helicase family. DEAH subfamily. Expressed in lymphoid tissues (at protein level). Expressed in brain, heart, skeletal muscle, colon, thymus, spleen, kidney, liver, small intestine, placenta, lung, lymphoid tissues and blood leukocytes.

It localises to the nucleus. The protein resides in the mitochondrion. It catalyses the reaction ATP + H2O = ADP + phosphate + H(+). This is Putative pre-mRNA-splicing factor ATP-dependent RNA helicase DHX32 (DHX32) from Homo sapiens (Human).